Consider the following 860-residue polypeptide: Probable leucine--tRNA ligase, cytoplasmic (860 aa).

The 'HIGH' region signature appears at Pro41–His51. The short motif at Lys552–Ser556 is the 'KMSKS' region element. Lys555 is a binding site for ATP.

The protein belongs to the class-I aminoacyl-tRNA synthetase family.

It is found in the cytoplasm. It carries out the reaction tRNA(Leu) + L-leucine + ATP = L-leucyl-tRNA(Leu) + AMP + diphosphate. This Enterocytozoon bieneusi (strain H348) (Microsporidian parasite) protein is Probable leucine--tRNA ligase, cytoplasmic.